Consider the following 1397-residue polypeptide: Probable cyclin-dependent serine/threonine-protein kinase DDB_G0292550 (1397 aa).

In terms of domain architecture, Protein kinase spans 4-287 (FQIIELIGSG…TKEALNHPWF (284 aa)). ATP is bound by residues 10–18 (IGSGSYGKV) and K33. The active-site Proton acceptor is D124. Disordered stretches follow at residues 412–567 (NNNN…NNNN), 671–728 (PLSI…NNGF), 763–831 (NEMG…NGNN), 845–949 (NNNN…YANH), 996–1101 (NGLA…NTHN), 1115–1174 (NNGF…NSPV), 1227–1324 (NSAS…SFGL), and 1340–1397 (KKKK…IVLD). The segment covering 676–715 (SQHHNTSSSDTHNNNNNNYNNNNNNNNNINNNNINSIHNQ) has biased composition (low complexity). Composition is skewed to low complexity over residues 845–941 (NNNN…NGNG), 1012–1021 (NSNNNNSGNN), 1028–1101 (NTFN…NTHN), and 1115–1155 (NNGF…TKNN). Positions 1156–1171 (TQFGPNILSSTQTSHN) are enriched in polar residues. 2 stretches are compositionally biased toward low complexity: residues 1253 to 1321 (NNNN…NNNS) and 1354 to 1380 (SSSQQSQTQQQHQIQQQSQTQQQSQTQ).

It belongs to the protein kinase superfamily. CMGC Ser/Thr protein kinase family. CDC2/CDKX subfamily.

The catalysed reaction is L-seryl-[protein] + ATP = O-phospho-L-seryl-[protein] + ADP + H(+). It carries out the reaction L-threonyl-[protein] + ATP = O-phospho-L-threonyl-[protein] + ADP + H(+). The protein is Probable cyclin-dependent serine/threonine-protein kinase DDB_G0292550 of Dictyostelium discoideum (Social amoeba).